The following is a 502-amino-acid chain: Cytochrome P450 81D1 (502 aa).

Residues 6-26 (IRVVLYSIFSLIFLIISFKFL) traverse the membrane as a helical segment. Cys440 is a binding site for heme.

This sequence belongs to the cytochrome P450 family. Heme serves as cofactor.

It is found in the membrane. The chain is Cytochrome P450 81D1 (CYP81D1) from Arabidopsis thaliana (Mouse-ear cress).